Here is a 685-residue protein sequence, read N- to C-terminus: MPVCGCLSVVLSHAVVLLMLVLHSASGHPQTFPCRLIQRVALCSGRQLSVIPDCLPHETEEIFFDRNLLENLQDGLSRYPFLRMFSCANNQLMTVAETAFIESHLLENLNLANNELHHGHKQVAQAFRSLTQLKTLDLSGNGLSEDMVSVLVANLSSLESLYLSRNGMQRLDESTFRDLHQLKELNVERNLLFEISGAFDHMKKLQRLNLAFNCLPCLVNFEMTQLLVLNASHNSIEWFITNQNLTETFQLETLDLSDNHLLFFPFLPTNNQIRTLLLSNNRVGFYQHLANSTSSNWTTSVDYYNLGQNISNITMDLWNENLHGNLSSVEFLDLSENKVNYFPQGFIKQMPQLYWLKLRSNCLQSFSLTSEDLPVTIYELDVSRNRLTEIKASQTSKNKLNNLTHLNLSTNDLQNFPPMIFTSLPNLNTLDLSHNTVDVCYSSNYMGLSGCVEWSSMASLKQLYLADCSIQNVPSSAFKGTSLTHLELSNNPNLHLKQQSLKGLANTLQHLGIGNTGLQDFDFSPYTNLKSLNISRNSLSKLPDSLMALNLKLLDLRDNSLTTIKSEHASLLAKKLQTVYMNGNAFNCCHLDWFRTFGENKGIHVADLSEITCLDLNYRRHKVVLTDAVYCGFTNNNKESVVWYILLFVTVSVSIMGISVIYMLTFKPRMLPRVIKKKCWRPTSY.

An N-terminal signal peptide occupies residues 1–27 (MPVCGCLSVVLSHAVVLLMLVLHSASG). The Extracellular segment spans residues 28 to 640 (HPQTFPCRLI…CGFTNNNKES (613 aa)). An LRRNT domain is found at 29-56 (PQTFPCRLIQRVALCSGRQLSVIPDCLP). 7 LRR repeats span residues 57–79 (HETE…LSRY), 80–102 (PFLR…AFIE), 103–129 (SHLL…AFRS), 130–154 (LTQL…LVAN), 155–178 (LSSL…TFRD), 180–201 (HQLK…AFDH), and 202–225 (MKKL…EMTQ). N-linked (GlcNAc...) asparagine glycosylation occurs at N154. 2 N-linked (GlcNAc...) asparagine glycosylation sites follow: N230 and N244. LRR repeat units lie at residues 248 to 271 (TFQL…PTNN) and 273 to 296 (IRTL…TSSN). N-linked (GlcNAc...) asparagine glycosylation is found at N291, N296, N309, N312, and N325. 11 LRR repeats span residues 326-349 (LSSV…FIKQ), 351-373 (PQLY…SEDL), 374-397 (PVTI…QTSK), 400-423 (LNNL…IFTS), 425-447 (PNLN…NYMG), 457-480 (MASL…AFKG), 482-503 (SLTH…SLKG), 505-526 (ANTL…FSPY), 527-549 (TNLK…LMAL), 551-571 (LKLL…HASL), and 573-596 (AKKL…WFRT). N-linked (GlcNAc...) asparagine glycosylation is found at N402 and N407. N533 carries N-linked (GlcNAc...) asparagine glycosylation. Positions 597 to 635 (FGENKGIHVADLSEITCLDLNYRRHKVVLTDAVYCGFTN) constitute an LRRCT domain. A helical transmembrane segment spans residues 641–661 (VVWYILLFVTVSVSIMGISVI). Over 662–685 (YMLTFKPRMLPRVIKKKCWRPTSY) the chain is Cytoplasmic.

Belongs to the LRRC32/LRRC33 family.

It is found in the cell membrane. The protein localises to the endoplasmic reticulum membrane. Functionally, key regulator of transforming growth factor beta-1 (TGFB1) specifically required for microglia function in the nervous system. Required for activation of latent TGF-beta-1 in macrophages and microglia: associates specifically via disulfide bonds with the Latency-associated peptide (LAP), which is the regulatory chain of TGFB1, and regulates integrin-dependent activation of TGF-beta-1. TGF-beta-1 activation mediated by lrrc33/nrros is highly localized: there is little spreading of TGF-beta-1 activated from one microglial cell to neighboring microglia, suggesting the existence of localized and selective activation of TGF-beta-1 by lrrc33/nrros. In Danio rerio (Zebrafish), this protein is Transforming growth factor beta activator LRRC33.